The chain runs to 424 residues: Enolase (424 aa).

(2R)-2-phosphoglycerate is bound at residue Gln165. Residue Glu207 is the Proton donor of the active site. Residues Asp244, Glu283, and Asp310 each contribute to the Mg(2+) site. Positions 335, 364, 365, and 386 each coordinate (2R)-2-phosphoglycerate. The Proton acceptor role is filled by Lys335.

Belongs to the enolase family. The cofactor is Mg(2+).

It is found in the cytoplasm. The protein localises to the secreted. Its subcellular location is the cell surface. It carries out the reaction (2R)-2-phosphoglycerate = phosphoenolpyruvate + H2O. It participates in carbohydrate degradation; glycolysis; pyruvate from D-glyceraldehyde 3-phosphate: step 4/5. In terms of biological role, catalyzes the reversible conversion of 2-phosphoglycerate (2-PG) into phosphoenolpyruvate (PEP). It is essential for the degradation of carbohydrates via glycolysis. The polypeptide is Enolase (Chlamydia caviae (strain ATCC VR-813 / DSM 19441 / 03DC25 / GPIC) (Chlamydophila caviae)).